Reading from the N-terminus, the 321-residue chain is MTAEHYSLVGDIGGTNARFALVKQGSIEPEAIEVLPCRDYENLDQAVVTYLERVGVASVRQACLAVASPLRGTRVTMTNNHWRFDIEAVRQVFGWSAFKVINDFTAMALGVPHVSDANLVHVCGGPGDPGRPKLVMGPGTGLGVSGLVPIRNGWVPLVTEGGHVDFAPTDDTEMDVLRLLRARFGRVSVERILCGQGLLNLYQAHAEIRGVAAPLDAPEKITAAAVDASDALAGEVLQHFCEMLGRTAGNSALTLGSLGGVYLCGGMLPGFLDFFLGSPFREAFVAKGRMRPLMEFTPVYVVTEPYTGLLGAAEALGNSEV.

ATP is bound at residue 10–15 (GDIGGT).

It belongs to the bacterial glucokinase family.

The protein localises to the cytoplasm. The catalysed reaction is D-glucose + ATP = D-glucose 6-phosphate + ADP + H(+). The protein is Glucokinase of Marinobacter nauticus (strain ATCC 700491 / DSM 11845 / VT8) (Marinobacter aquaeolei).